The chain runs to 623 residues: uncharacterized protein (623 aa).

A coiled-coil region spans residues 24–51; sequence RALVQKDELAQASQDVEDMRDCYDSLLN. Disordered stretches follow at residues 148-170, 240-343, 362-393, 454-531, and 585-607; these read TRQR…QQLQ, FSGL…TTPP, ALPT…TKAI, SFSG…LGYS, and KKLG…PQAL. Residues 243 to 259 are compositionally biased toward acidic residues; sequence LEDDDGDDEIENNENDG. The segment covering 328-343 has biased composition (polar residues); the sequence is VSQSAPLFPENRTTPP. Over residues 364 to 379 the composition is skewed to low complexity; sequence PTPVETTRSPSSTTSP. Positions 384 to 393 are enriched in polar residues; that stretch reads VGSSNPTKAI. Residues 484-495 are compositionally biased toward low complexity; sequence PVSKLPKVSSSP. Positions 496 to 506 are enriched in polar residues; it reads TASPTFVSTPK. Residues 590–606 are compositionally biased toward pro residues; that stretch reads PSPPLTPMSLIHPPPQA.

This is an uncharacterized protein from Arabidopsis thaliana (Mouse-ear cress).